A 418-amino-acid polypeptide reads, in one-letter code: eIF5-mimic protein 2 (418 aa).

A compositionally biased stretch (polar residues) spans 1–14 (MNQKQQKPTLSGQR). The segment at 1-25 (MNQKQQKPTLSGQRFKTRKRDEKER) is disordered. A W2 domain is found at 246–413 (NQQTIGARKE…KNAEEESESE (168 aa)).

The protein belongs to the BZW family.

In terms of biological role, translation initiation regulator which may repress repeat-associated non-AUG (RAN) initiated translation probably by acting as a competitive inhibitor of eukaryotic translation initiation factor 5 (EIF5) function. Enhances histone H4 gene transcription but does not seem to bind DNA directly. This Gallus gallus (Chicken) protein is eIF5-mimic protein 2 (BZW1).